Here is a 214-residue protein sequence, read N- to C-terminus: Probable nicotinate-nucleotide adenylyltransferase (214 aa).

Belongs to the NadD family.

The catalysed reaction is nicotinate beta-D-ribonucleotide + ATP + H(+) = deamido-NAD(+) + diphosphate. It participates in cofactor biosynthesis; NAD(+) biosynthesis; deamido-NAD(+) from nicotinate D-ribonucleotide: step 1/1. In terms of biological role, catalyzes the reversible adenylation of nicotinate mononucleotide (NaMN) to nicotinic acid adenine dinucleotide (NaAD). This is Probable nicotinate-nucleotide adenylyltransferase from Psychromonas ingrahamii (strain DSM 17664 / CCUG 51855 / 37).